Here is a 273-residue protein sequence, read N- to C-terminus: Undecaprenyl-diphosphatase (273 aa).

A run of 7 helical transmembrane segments spans residues 13–35 (GLVEGFTEFLPISSTGHLIVFGN), 45–62 (VFEIAIQLGAVLAVVFEY), 82–102 (FVLNLAIAFIPAAVMGLLFDK), 108–128 (LFNPLSVAVMLVLGGFFILWV), 186–206 (TEFSFFLAVPMMVAATAYDVL), 219–239 (LILIGFIAAFVSGLVAVKALL), and 250–270 (FAYYRIVFGIVIIILWLSGWI).

This sequence belongs to the UppP family.

Its subcellular location is the cell inner membrane. The enzyme catalyses di-trans,octa-cis-undecaprenyl diphosphate + H2O = di-trans,octa-cis-undecaprenyl phosphate + phosphate + H(+). Its function is as follows. Catalyzes the dephosphorylation of undecaprenyl diphosphate (UPP). Confers resistance to bacitracin. The polypeptide is Undecaprenyl-diphosphatase (Neisseria gonorrhoeae (strain NCCP11945)).